A 1370-amino-acid polypeptide reads, in one-letter code: DNA polymerase II large subunit (1370 aa).

Disordered regions lie at residues 279 to 317 (IGAD…PRAA) and 1041 to 1081 (AGDA…DGGS).

It belongs to the archaeal DNA polymerase II family. As to quaternary structure, heterodimer of a large subunit and a small subunit. In terms of processing, this protein undergoes a protein self splicing that involves a post-translational excision of the intervening region (intein) followed by peptide ligation.

The enzyme catalyses DNA(n) + a 2'-deoxyribonucleoside 5'-triphosphate = DNA(n+1) + diphosphate. It carries out the reaction Exonucleolytic cleavage in the 3'- to 5'-direction to yield nucleoside 5'-phosphates.. In terms of biological role, possesses two activities: a DNA synthesis (polymerase) and an exonucleolytic activity that degrades single-stranded DNA in the 3'- to 5'-direction. Has a template-primer preference which is characteristic of a replicative DNA polymerase. The chain is DNA polymerase II large subunit (polC) from Halobacterium salinarum (strain ATCC 700922 / JCM 11081 / NRC-1) (Halobacterium halobium).